The primary structure comprises 232 residues: Nuclear transcription factor Y subunit nfyc-1 (232 aa).

Positions 191-232 (TVPTTSTNGPGHMSEDSFQDPNMHSDFHQRTSNSSVNRSHHN) are disordered. Positions 220-232 (RTSNSSVNRSHHN) are enriched in polar residues.

Belongs to the NFYC/HAP5 subunit family. As to quaternary structure, forms two NF-Y heterotrimeric transcription factor complexes: the nfya-1-NF-Y complex is composed of nfya-1, nfyb-1 and nfyc-1, and the nfya-2-NF-Y complex is composed of nfya-2, nfyb-1 and nfyc-1. Interacts with nfyb-1; the interaction is direct and is required for the interaction with either nfya-1 or nfya-2, and subsequent binding of the complex to the 5'-CCAAT-3' box motif in DNA. In terms of tissue distribution, expressed in certain parts of the gonads with high expression in fertilized oocytes in the uterus and mature oocytes from the distal to the proximal arm of the gonad, but weak expression in the syncytial ovaries and immature oocytes at the beginning of the proximal arm of the gonad. Expressed in the excretory cell, secretory cells in the pharyngeal terminal bulb wall, in the small ganglia surrounding the pharynx and in the neurons running anteriorly to the sensory organs in the head. Not expressed in the intestine, the hypodermis or body wall muscle surrounding the pseudocoelomic space.

The protein resides in the nucleus. Its subcellular location is the cytoplasm. It is found in the perikaryon. In terms of biological role, component of sequence-specific heterotrimeric transcription factor (nfya-1-NF-Y and nfya-2-NF-Y) complexes which specifically recognize a 5'-CCAAT-3' box motif found in the promoters of its target genes to regulate their expression and control cellular identity in particular tissue types. In association with the components in the NF-Y complexes, represses the expression of the T-box transcription factor tbx-2 throughout larval development, which most likely restricts its expression to certain tissues. May act to repress txb-2 expression in conjunction with tbx-2 itself, which has an autoregulatory role. In association with the components in the nfya-1-NF-Y complex, negatively regulates the expression of the homeobox protein egl-5 to spatially restrict its expression in tissues such as the head. May regulate egl-5 expression in association with the mes-2-mes-3-mes-6 complex. The protein is Nuclear transcription factor Y subunit nfyc-1 of Caenorhabditis elegans.